A 431-amino-acid polypeptide reads, in one-letter code: Adenylosuccinate synthetase (431 aa).

GTP contacts are provided by residues 12-18 (GDEGKGK) and 40-42 (GHT). D13 (proton acceptor) is an active-site residue. D13 and G40 together coordinate Mg(2+). Residues 13-16 (DEGK), 38-41 (NAGH), T130, R144, Q225, T240, and R304 contribute to the IMP site. H41 functions as the Proton donor in the catalytic mechanism. 300–306 (ATTGRPR) lines the substrate pocket. Residues R306, 332-334 (KLD), and 414-416 (SVG) contribute to the GTP site.

It belongs to the adenylosuccinate synthetase family. Homodimer. Mg(2+) serves as cofactor.

The protein resides in the cytoplasm. The enzyme catalyses IMP + L-aspartate + GTP = N(6)-(1,2-dicarboxyethyl)-AMP + GDP + phosphate + 2 H(+). The protein operates within purine metabolism; AMP biosynthesis via de novo pathway; AMP from IMP: step 1/2. In terms of biological role, plays an important role in the de novo pathway of purine nucleotide biosynthesis. Catalyzes the first committed step in the biosynthesis of AMP from IMP. This chain is Adenylosuccinate synthetase, found in Geotalea uraniireducens (strain Rf4) (Geobacter uraniireducens).